The sequence spans 131 residues: Small ribosomal subunit protein uS11 (131 aa).

Positions 1-15 (MAAQKVKKTRRRKER) are enriched in basic residues. A disordered region spans residues 1-23 (MAAQKVKKTRRRKERKNVEHGAA).

It belongs to the universal ribosomal protein uS11 family. Part of the 30S ribosomal subunit. Interacts with proteins S7 and S18. Binds to IF-3.

Located on the platform of the 30S subunit, it bridges several disparate RNA helices of the 16S rRNA. Forms part of the Shine-Dalgarno cleft in the 70S ribosome. This Clostridium perfringens (strain 13 / Type A) protein is Small ribosomal subunit protein uS11.